Reading from the N-terminus, the 93-residue chain is Putative transmembrane protein ORF25 (93 aa).

3 consecutive transmembrane segments (helical) span residues 1–21, 22–42, and 60–80; these read MAGIHVVLGLFEGALFTNVNA, FLVLMIILSGLIGLFSGYASI, and LWIFNSMLYIIMTIVFVVMSL.

The protein localises to the host membrane. In His1 virus (isolate Australia/Victoria) (His1V), this protein is Putative transmembrane protein ORF25.